A 758-amino-acid chain; its full sequence is 5-methyltetrahydropteroyltriglutamate--homocysteine methyltransferase (758 aa).

Residues 16–19 (RELK) and lysine 116 each bind 5-methyltetrahydropteroyltri-L-glutamate. L-homocysteine is bound by residues 436-438 (IGS) and glutamate 489. L-methionine is bound by residues 436–438 (IGS) and glutamate 489. 5-methyltetrahydropteroyltri-L-glutamate is bound by residues 520 to 521 (RC) and tryptophan 566. Residue aspartate 604 coordinates L-homocysteine. Aspartate 604 is a binding site for L-methionine. Glutamate 610 is a 5-methyltetrahydropteroyltri-L-glutamate binding site. Positions 646, 648, and 670 each coordinate Zn(2+). Histidine 699 acts as the Proton donor in catalysis. Cysteine 731 is a Zn(2+) binding site.

The protein belongs to the vitamin-B12 independent methionine synthase family. Zn(2+) serves as cofactor.

It catalyses the reaction 5-methyltetrahydropteroyltri-L-glutamate + L-homocysteine = tetrahydropteroyltri-L-glutamate + L-methionine. The protein operates within amino-acid biosynthesis; L-methionine biosynthesis via de novo pathway; L-methionine from L-homocysteine (MetE route): step 1/1. Catalyzes the transfer of a methyl group from 5-methyltetrahydrofolate to homocysteine resulting in methionine formation. The polypeptide is 5-methyltetrahydropteroyltriglutamate--homocysteine methyltransferase (Xylella fastidiosa (strain 9a5c)).